A 450-amino-acid chain; its full sequence is Putative nucleolar protein 5-3 (450 aa).

One can recognise a Nop domain in the interval 252 to 370 (IAPNLTALVG…LEARLRNLEG (119 aa)). The segment at 375–423 (ACEEEEEVNDKDTKKEADDEEEPKTEECSKKRKKEAELETVEDPAKKSK) is disordered. Residues 399-423 (TEECSKKRKKEAELETVEDPAKKSK) are compositionally biased toward basic and acidic residues.

Belongs to the NOP5/NOP56 family.

Its subcellular location is the nucleus. The protein resides in the nucleolus. In terms of biological role, required for 60S ribosomal subunit biogenesis. In Arabidopsis thaliana (Mouse-ear cress), this protein is Putative nucleolar protein 5-3 (NOP5-3).